The following is a 321-amino-acid chain: Capsid protein (321 aa).

The tract at residues 1-43 is disordered; it reads MSGEQTEQISKDKAVAAEQARKEQIAEGKKAAESPEVERRKKN. The span at 9–39 shows a compositional bias: basic and acidic residues; it reads ISKDKAVAAEQARKEQIAEGKKAAESPEVER.

The protein belongs to the potexviruses coat protein family.

The protein localises to the virion. Required for genome encapsidation. Forms ribonucleoprotein complexes along with TGB1 helicase and viral RNA. The polypeptide is Capsid protein (Poplar mosaic virus (isolate ATCC Pv275) (PMV)).